The primary structure comprises 589 residues: Protein FAM161B (589 aa).

Disordered stretches follow at residues 1–166 (MTVG…VCSW), 265–297 (KKEQ…RKIP), and 386–444 (AERR…GLAS). Residues 92-106 (PDSDLNDAEDEEDLE) are compositionally biased toward acidic residues. Over residues 151–166 (TSDSGPPSQHRSVCSW) the composition is skewed to polar residues. Over residues 265 to 275 (KKEQQKEDAPQ) the composition is skewed to basic and acidic residues. Positions 287–297 (SPKKATSRKIP) are enriched in basic residues. Positions 386 to 396 (AERRETRETTR) are enriched in basic and acidic residues. Positions 510 to 577 (EEVFKAKLKE…ALKQAGLEEE (68 aa)) form a coiled coil.

It belongs to the FAM161 family. As to quaternary structure, interacts with FAM161A.

The polypeptide is Protein FAM161B (Fam161b) (Mus musculus (Mouse)).